The primary structure comprises 213 residues: Ras-related protein Rab-4B (213 aa).

Ala-2 bears the N-acetylalanine mark. 6 residues coordinate GDP: Gly-18, Thr-19, Gly-20, Lys-21, Ser-22, and Cys-23. The GTP site is built by Gly-18, Thr-19, Gly-20, Lys-21, Ser-22, Cys-23, Ser-37, His-39, and Thr-40. Ser-22 provides a ligand contact to Mg(2+). The Switch 1 motif lies at 39–44 (HTIGVE). Mg(2+)-binding residues include Thr-40 and Asp-63. The short motif at 65–74 (AGQERFRSVT) is the Switch 2 element. Gly-66 lines the GTP pocket. Gln-67 bears the 5-glutamyl serotonin mark. Asn-121, Lys-122, Asp-124, Ala-152, and Leu-153 together coordinate GDP. GTP is bound by residues Asn-121, Lys-122, Asp-124, Ala-152, and Leu-153. 2 positions are modified to phosphoserine: Ser-185 and Ser-193. S-geranylgeranyl cysteine attachment occurs at residues Cys-211 and Cys-213. Cys-213 is subject to Cysteine methyl ester.

It belongs to the small GTPase superfamily. Rab family. In terms of assembly, interacts (GTP-bound form) with RUFY1; the interaction allows endosomal tethering and fusion. Requires Mg(2+) as cofactor. In terms of processing, serotonylation of Gln-67 by TGM2 during activation and aggregation of platelets leads to constitutive activation of GTPase activity.

Its subcellular location is the cell membrane. It is found in the early endosome membrane. The catalysed reaction is GTP + H2O = GDP + phosphate + H(+). Its activity is regulated as follows. Regulated by guanine nucleotide exchange factors (GEFs) which promote the exchange of bound GDP for free GTP. Regulated by GTPase activating proteins (GAPs) which increase the GTP hydrolysis activity. Inhibited by GDP dissociation inhibitors (GDIs). Functionally, the small GTPases Rab are key regulators of intracellular membrane trafficking, from the formation of transport vesicles to their fusion with membranes. Rabs cycle between an inactive GDP-bound form and an active GTP-bound form that is able to recruit to membranes different set of downstream effectors directly responsible for vesicle formation, movement, tethering and fusion. RAB4B mediates endosomal tethering and fusion through the interaction with RUFY1 and RAB14. Acts as a regulator of platelet alpha-granule release during activation and aggregation of platelets. This Homo sapiens (Human) protein is Ras-related protein Rab-4B.